Here is a 347-residue protein sequence, read N- to C-terminus: Protein RecA (347 aa).

Residue 64-71 (GPESSGKT) participates in ATP binding.

The protein belongs to the RecA family.

It localises to the cytoplasm. Functionally, can catalyze the hydrolysis of ATP in the presence of single-stranded DNA, the ATP-dependent uptake of single-stranded DNA by duplex DNA, and the ATP-dependent hybridization of homologous single-stranded DNAs. It interacts with LexA causing its activation and leading to its autocatalytic cleavage. This Bartonella henselae (strain ATCC 49882 / DSM 28221 / CCUG 30454 / Houston 1) (Rochalimaea henselae) protein is Protein RecA.